The following is a 397-amino-acid chain: pH-sensitive adenylate cyclase MT1302 (397 aa).

The tract at residues 1–191 is regulatory domain; it reads MTDHVREADD…IQDMLFMQLR (191 aa). The segment at 192-206 is linker; sequence HMMETEAVNAGERAA. The segment at 211-397 is catalytic domain; it reads PGARQVTVAF…QDDDLAGSSP (187 aa). The Guanylate cyclase domain maps to 217–325; it reads TVAFADLVGF…SPVNVASRVT (109 aa). Asp-222 contacts Mn(2+). Lys-261 contacts substrate. Residue Asp-265 coordinates Mn(2+). ATP is bound at residue Arg-298. A substrate-binding site is contributed by Asp-312.

It belongs to the adenylyl cyclase class-4/guanylyl cyclase family. In terms of assembly, homodimer. Requires Mn(2+) as cofactor. The cofactor is Mg(2+).

It carries out the reaction ATP = 3',5'-cyclic AMP + diphosphate. Catalyzes the formation of the second messenger cAMP. This Mycobacterium tuberculosis (strain CDC 1551 / Oshkosh) protein is pH-sensitive adenylate cyclase MT1302.